A 280-amino-acid chain; its full sequence is Ribonuclease Z (280 aa).

7 residues coordinate Zn(2+): His61, His63, Asp65, His66, His153, Asp176, and His240. Asp65 acts as the Proton acceptor in catalysis.

This sequence belongs to the RNase Z family. As to quaternary structure, homodimer. The cofactor is Zn(2+).

It carries out the reaction Endonucleolytic cleavage of RNA, removing extra 3' nucleotides from tRNA precursor, generating 3' termini of tRNAs. A 3'-hydroxy group is left at the tRNA terminus and a 5'-phosphoryl group is left at the trailer molecule.. Functionally, zinc phosphodiesterase, which displays some tRNA 3'-processing endonuclease activity. Probably involved in tRNA maturation, by removing a 3'-trailer from precursor tRNA. This Mycobacterium avium (strain 104) protein is Ribonuclease Z.